Here is a 2801-residue protein sequence, read N- to C-terminus: Neurobeachin-like protein 2 (2801 aa).

The interval Arg-1379–Ala-1529 is disordered. Residues Glu-1383–Asp-1393 are compositionally biased toward acidic residues. Composition is skewed to polar residues over residues Asp-1400 to Asn-1413, Gly-1424 to Val-1437, Lys-1470 to Glu-1481, and Ser-1500 to Gln-1528. The 101-residue stretch at Ser-1986 to Leu-2086 folds into the BEACH-type PH domain. In terms of domain architecture, BEACH spans Arg-2099–Arg-2391. WD repeat units lie at residues Leu-2431–Pro-2468, Arg-2492–Lys-2535, Leu-2538–Val-2575, Arg-2588–Val-2626, Trp-2633–Leu-2676, Thr-2684–Leu-2719, and Ala-2727–Gly-2762.

This sequence belongs to the WD repeat neurobeachin family.

The protein localises to the endoplasmic reticulum. Involved in thrombopoiesis. Plays a role in the development or secretion of alpha-granules, that contain several growth factors important for platelet biogenesis. The polypeptide is Neurobeachin-like protein 2 (nbeal2) (Danio rerio (Zebrafish)).